Reading from the N-terminus, the 375-residue chain is Queuine tRNA-ribosyltransferase (375 aa).

Asp-93 serves as the catalytic Proton acceptor. Residues 93–97, Asp-147, Gln-194, and Gly-221 contribute to the substrate site; that span reads DSGGY. The tract at residues 252–258 is RNA binding; that stretch reads GVGKPDD. The active-site Nucleophile is Asp-271. The tract at residues 276 to 280 is RNA binding; important for wobble base 34 recognition; the sequence is TRSGR. Positions 309, 311, 314, and 340 each coordinate Zn(2+).

The protein belongs to the queuine tRNA-ribosyltransferase family. In terms of assembly, homodimer. Within each dimer, one monomer is responsible for RNA recognition and catalysis, while the other monomer binds to the replacement base PreQ1. Zn(2+) is required as a cofactor.

The catalysed reaction is 7-aminomethyl-7-carbaguanine + guanosine(34) in tRNA = 7-aminomethyl-7-carbaguanosine(34) in tRNA + guanine. It functions in the pathway tRNA modification; tRNA-queuosine biosynthesis. Functionally, catalyzes the base-exchange of a guanine (G) residue with the queuine precursor 7-aminomethyl-7-deazaguanine (PreQ1) at position 34 (anticodon wobble position) in tRNAs with GU(N) anticodons (tRNA-Asp, -Asn, -His and -Tyr). Catalysis occurs through a double-displacement mechanism. The nucleophile active site attacks the C1' of nucleotide 34 to detach the guanine base from the RNA, forming a covalent enzyme-RNA intermediate. The proton acceptor active site deprotonates the incoming PreQ1, allowing a nucleophilic attack on the C1' of the ribose to form the product. After dissociation, two additional enzymatic reactions on the tRNA convert PreQ1 to queuine (Q), resulting in the hypermodified nucleoside queuosine (7-(((4,5-cis-dihydroxy-2-cyclopenten-1-yl)amino)methyl)-7-deazaguanosine). This is Queuine tRNA-ribosyltransferase from Sphingopyxis alaskensis (strain DSM 13593 / LMG 18877 / RB2256) (Sphingomonas alaskensis).